A 180-amino-acid polypeptide reads, in one-letter code: MQNPQNLIWIDLEMTGLDPDRDVIIEMATIVTDSDLNTLAEGPVIAIHQPEEILAGMDEWNTRQHGQSGLTQRVRESTVSMAEAEAQTLAFLEQWVPKRSSPICGNSICQDRRFLYRHMPRLEGYFHYRNLDVSTLKELAARWAPQVRESFKKGNTHLALDDIRESIAELRHYRDHFIKL.

Positions 7-170 constitute an Exonuclease domain; it reads LIWIDLEMTG…DDIRESIAEL (164 aa). The active site involves Tyr-128.

Belongs to the oligoribonuclease family.

It localises to the cytoplasm. Its function is as follows. 3'-to-5' exoribonuclease specific for small oligoribonucleotides. This is Oligoribonuclease from Pseudomonas aeruginosa (strain UCBPP-PA14).